The primary structure comprises 360 residues: Uptake hydrogenase small subunit (360 aa).

Positions 1–46 (MATAETFYDVIRRQGITRRSFTKFCSLTAASLGFGPGAATAMAEAL) form a signal peptide, tat-type signal. Residues Cys62, Cys65, Cys160, Cys194, His232, Cys235, Cys260, and Cys266 each contribute to the [4Fe-4S] cluster site. [3Fe-4S] cluster contacts are provided by Cys275, Cys294, and Cys297.

This sequence belongs to the [NiFe]/[NiFeSe] hydrogenase small subunit family. In terms of assembly, heterodimer of a large and a small subunit. It depends on [4Fe-4S] cluster as a cofactor. The cofactor is [3Fe-4S] cluster. Predicted to be exported by the Tat system. The position of the signal peptide cleavage has not been experimentally proven.

The protein localises to the cell membrane. It catalyses the reaction H2 + A = AH2. This enzyme recycles the H(2) produced by nitrogenase to increase the production of ATP and to protect nitrogenase against inhibition or damage by O(2) under carbon- or phosphate-limited conditions. This chain is Uptake hydrogenase small subunit (hupA), found in Rhizobium leguminosarum bv. viciae.